The primary structure comprises 306 residues: Probable dimethyladenosine transferase (306 aa).

Positions 30, 32, 57, 78, 106, and 121 each coordinate S-adenosyl-L-methionine.

The protein belongs to the class I-like SAM-binding methyltransferase superfamily. rRNA adenine N(6)-methyltransferase family. As to quaternary structure, part of the small subunit (SSU) processome, composed of more than 70 proteins and the RNA chaperone small nucleolar RNA (snoRNA) U3.

The protein resides in the nucleus. Its subcellular location is the nucleolus. It catalyses the reaction adenosine(1779)/adenosine(1780) in 18S rRNA + 4 S-adenosyl-L-methionine = N(6)-dimethyladenosine(1779)/N(6)-dimethyladenosine(1780) in 18S rRNA + 4 S-adenosyl-L-homocysteine + 4 H(+). Functionally, specifically dimethylates two adjacent adenosines in the loop of a conserved hairpin near the 3'-end of 18S rRNA in the 40S particle. Involved in the pre-rRNA processing steps leading to small-subunit rRNA production independently of its RNA-modifying catalytic activity. Part of the small subunit (SSU) processome, first precursor of the small eukaryotic ribosomal subunit. During the assembly of the SSU processome in the nucleolus, many ribosome biogenesis factors, an RNA chaperone and ribosomal proteins associate with the nascent pre-rRNA and work in concert to generate RNA folding, modifications, rearrangements and cleavage as well as targeted degradation of pre-ribosomal RNA by the RNA exosome. This Drosophila melanogaster (Fruit fly) protein is Probable dimethyladenosine transferase.